The sequence spans 132 residues: Small ribosomal subunit protein uS8 (132 aa).

The protein belongs to the universal ribosomal protein uS8 family. Part of the 30S ribosomal subunit. Contacts proteins S5 and S12.

In terms of biological role, one of the primary rRNA binding proteins, it binds directly to 16S rRNA central domain where it helps coordinate assembly of the platform of the 30S subunit. This Rickettsia canadensis (strain McKiel) protein is Small ribosomal subunit protein uS8.